The chain runs to 469 residues: Dihydroorotate dehydrogenase (quinone), mitochondrial (469 aa).

Residues 1 to 37 constitute a mitochondrion transit peptide; sequence MSSSAAALAWRRSLRDALLRGSAWRGAPAANSAAARL. Residues 62–82 form a helical membrane-spanning segment; that stretch reads LLTGAMIGLAIAGGAYVSTAD. Residues 150–154 and S174 each bind FMN; that span reads AGFDK. K154 lines the substrate pocket. Residue 199–203 coordinates substrate; the sequence is NRCGF. The disordered stretch occupies residues 219–247; sequence HGKRKMEETSSSTSPTTSDVKQGGKAGPG. Positions 227–236 are enriched in low complexity; that stretch reads TSSSTSPTTS. FMN-binding residues include N252 and N283. 283-288 contacts substrate; the sequence is NVSSPN. Catalysis depends on S286, which acts as the Nucleophile. FMN contacts are provided by K328 and S356. 357 to 358 contributes to the substrate binding site; that stretch reads NT. FMN is bound by residues G380, G409, and 430–431; that span reads YT.

The protein belongs to the dihydroorotate dehydrogenase family. Type 2 subfamily. FMN is required as a cofactor.

Its subcellular location is the mitochondrion inner membrane. The catalysed reaction is (S)-dihydroorotate + a quinone = orotate + a quinol. It functions in the pathway pyrimidine metabolism; UMP biosynthesis via de novo pathway; orotate from (S)-dihydroorotate (quinone route): step 1/1. Catalyzes the conversion of dihydroorotate to orotate with quinone as electron acceptor. This is Dihydroorotate dehydrogenase (quinone), mitochondrial (PYRD) from Oryza sativa subsp. japonica (Rice).